Consider the following 141-residue polypeptide: MNIKTLCHPEYKRISVESLLNPVEETIDCEKPHSQTKINTAKPISASLYVTTNNTAVVQHNVQKRKGVTRRCPQCAVIKTSPQWREGPDGEVTLCNACGLFYRKIFLVFGKDLAKRYFNEIKGVSVKRKVPKSLYGVTRTR.

A GATA-type zinc finger spans residues 72–98; it reads CPQCAVIKTSPQWREGPDGEVTLCNAC.

The sequence is that of Protein GAT3 (GAT3) from Saccharomyces cerevisiae (strain ATCC 204508 / S288c) (Baker's yeast).